We begin with the raw amino-acid sequence, 96 residues long: Small ribosomal subunit protein bS18 (96 aa).

Belongs to the bacterial ribosomal protein bS18 family. Part of the 30S ribosomal subunit. Forms a tight heterodimer with protein bS6.

Functionally, binds as a heterodimer with protein bS6 to the central domain of the 16S rRNA, where it helps stabilize the platform of the 30S subunit. This is Small ribosomal subunit protein bS18 from Borrelia garinii subsp. bavariensis (strain ATCC BAA-2496 / DSM 23469 / PBi) (Borreliella bavariensis).